The chain runs to 493 residues: Rop guanine nucleotide exchange factor 10 (493 aa).

Disordered regions lie at residues 1-45 and 400-423; these read MFDG…RSDM and GEAE…VVAA. Residues 17 to 27 are compositionally biased toward basic and acidic residues; it reads DGMHTPEHELA. In terms of domain architecture, PRONE spans 35–401; that stretch reads RRGKQNRRSD…RLVQRQLMGE (367 aa).

In terms of biological role, guanine-nucleotide exchange factor (GEF) that acts as an activator of Rop (Rho of plants) GTPases by promoting the exchange of GDP for GTP. In Arabidopsis thaliana (Mouse-ear cress), this protein is Rop guanine nucleotide exchange factor 10 (ROPGEF10).